Reading from the N-terminus, the 773-residue chain is E3 ubiquitin-protein ligase msl-2 (773 aa).

Residues cysteine 41, cysteine 44, cysteine 59, histidine 61, cysteine 64, cysteine 67, cysteine 78, and cysteine 84 each coordinate Zn(2+). The segment at 41 to 85 adopts an RING-type zinc-finger fold; that stretch reads CVVCCQLLVDPYSPKGKRCQHNVCRLCLRGKKHLFPSCTQCEGCS. Positions 424–468 form a coiled coil; it reads VQTELQDAESLQKDFEDAKAAAEEAKEKEKDLHAISAELQKEDSD. A disordered region spans residues 460–525; the sequence is AELQKEDSDE…EKVKPPKPKC (66 aa). In terms of domain architecture, CXC MSL2-type spans 520-571; sequence PPKPKCRCGISGSSNTLTTCRNSRCPCYKSYNSCAGCHCVCCKNPHKEDYVE. Zn(2+) contacts are provided by cysteine 525, cysteine 527, cysteine 539, cysteine 544, cysteine 546, cysteine 553, cysteine 556, cysteine 558, and cysteine 561. The C-terminal disordered region (CTD) stretch occupies residues 571 to 773; it reads ESDEDDDLED…EEIMSGSDDL (203 aa). Residues 572 to 581 show a composition bias toward acidic residues; the sequence is SDEDDDLEDF. The segment at 572–616 is disordered; the sequence is SDEDDDLEDFEMPKDVPEPMTQSEEPVVAEPRQEENSMAPPDSSA. Residues 620 to 685 are clamp-binding domain (CBD); that stretch reads LVPLNNLQQS…SLPQYAYIMP (66 aa). The interval 650-708 is pro/Bas region; that stretch reads QGSKPLDPVTVGFTIRVQLQHTDGFGSLPQYAYIMPTIDPPNPPAPSLSPPPPPAPDRE. Over residues 687–704 the composition is skewed to pro residues; sequence IDPPNPPAPSLSPPPPPA. A disordered region spans residues 687-773; that stretch reads IDPPNPPAPS…EEIMSGSDDL (87 aa). Over residues 705–714 the composition is skewed to basic and acidic residues; sequence PDREVIEPPA. The segment covering 715–726 has biased composition (basic residues); the sequence is KKFRTSRTRRGR. Over residues 742–759 the composition is skewed to polar residues; it reads GSRSNSAAGDRSSATDNA.

Belongs to the MSL2 family. As to quaternary structure, component of the male-specific lethal (MSL) histone acetyltransferase complex, composed of mof, mle, msl-1, msl-2 and msl-3 proteins, as well as roX1 and roX2 non-coding RNAs. When not associated with chromatin, the MSL complex associates with msl-2 mRNAs, possibly to regulate the amount of available MSL complex. Interacts with Clamp; promoting cooperative binding to DNA PionX sites and recruitment of the MSL complex to chromatin. Autoubiquitinated.

The protein localises to the nucleus. It is found in the chromosome. It carries out the reaction S-ubiquitinyl-[E2 ubiquitin-conjugating enzyme]-L-cysteine + [acceptor protein]-L-lysine = [E2 ubiquitin-conjugating enzyme]-L-cysteine + N(6)-ubiquitinyl-[acceptor protein]-L-lysine.. It functions in the pathway protein modification; protein ubiquitination. In terms of biological role, limiting component of the male-specific lethal (MSL) histone acetyltransferase complex, a multiprotein complex essential for elevating transcription of the single X chromosome in the male (X chromosome dosage compensation). The MSL complex specifically associates with the single X chromosome in males and mediates formation of H4K16ac, promoting a two-fold activation of X chromosome. Msl-2 is only produced in males, constituting the limiting component of the MSL complex. Within the MSL complex, msl-2 mediates the selective binding to the X chromosome and recruitment of the MSL complex via two different mechanisms. Recognizes DNA motifs that are enriched on X chromosome, named PionX sites, which are characterized by sequence features and distinct DNA conformation (base roll). Specific recognition of the X chromosome is also mediated by the formation of a gel-like state: msl-2 undergoes liquid-liquid phase separation upon binding to roX1 and roX2 non-coding RNAs, leading to nucleate the MSL complex on the X chromosome. Msl-2 is also required for translation and/or stability of msl-1 in males. Also acts as an E3 ubiquitin ligase: in complex with msl-1, mediates ubiquitination of histone H2B at 'Lys-34' (H2BK34Ub). Also catalyzes ubiquitination of msl-1, msl-3 and mof components of the MSL complex. In Drosophila melanogaster (Fruit fly), this protein is E3 ubiquitin-protein ligase msl-2.